The primary structure comprises 633 residues: Guanylate-binding protein 6 (633 aa).

The tract at residues 1-310 (MESGPKMLAP…EAVNSGAVPC (310 aa)) is GTPase domain (Globular). The GB1/RHD3-type G domain occupies 35-277 (SQPVVVVAIV…FSSYIFTHAR (243 aa)). Residues 45 to 52 (GLYRTGKS), 67 to 69 (LGS), and 97 to 101 (DTEGL) contribute to the GTP site.

This sequence belongs to the TRAFAC class dynamin-like GTPase superfamily. GB1/RHD3 GTPase family. GB1 subfamily.

The protein resides in the cytoplasmic vesicle. The enzyme catalyses GTP + H2O = GDP + phosphate + H(+). Functionally, interferon (IFN)-inducible GTPase that plays important roles in innate immunity against a diverse range of bacterial, viral and protozoan pathogens, such as bacterial pathogens Listeria monocytogenes and Mycobacterium bovis BCG as well as the protozoan pathogen Toxoplasma gondii. Confers protection to several pathogens, including the bacterial pathogens Listeria monocytogenes and Mycobacterium bovis BCG as well as the protozoan pathogen Toxoplasma gondii. This Pongo abelii (Sumatran orangutan) protein is Guanylate-binding protein 6 (GBP6).